Here is a 50-residue protein sequence, read N- to C-terminus: uncharacterized protein (50 aa).

Residues 5–19 (IIIIVIVIIIFFFYL) traverse the membrane as a helical segment. Residues 19–50 (LKQKKLTNCETQVVKVQKDIDEINLKLKKLNK) adopt a coiled-coil conformation.

It localises to the membrane. This is an uncharacterized protein from Acheta domesticus (House cricket).